A 377-amino-acid chain; its full sequence is UPF0754 membrane protein LMHCC_0318 (377 aa).

2 helical membrane passes run 1-21 (MSVLFTILLMAVIGGFIGAMT) and 357-377 (YLGGILGGFIGVIQGILAMWI).

Belongs to the UPF0754 family.

Its subcellular location is the cell membrane. The chain is UPF0754 membrane protein LMHCC_0318 from Listeria monocytogenes serotype 4a (strain HCC23).